Reading from the N-terminus, the 161-residue chain is Nucleotide-binding protein Gmet_3206 (161 aa).

It belongs to the YajQ family.

Functionally, nucleotide-binding protein. This chain is Nucleotide-binding protein Gmet_3206, found in Geobacter metallireducens (strain ATCC 53774 / DSM 7210 / GS-15).